Here is a 279-residue protein sequence, read N- to C-terminus: Energy-coupling factor transporter ATP-binding protein EcfA1 (279 aa).

The ABC transporter domain maps to 5–240; it reads IELKKVTFNY…GDELLQLGLD (236 aa). An ATP-binding site is contributed by 40 to 47; the sequence is GHNGSGKS.

It belongs to the ABC transporter superfamily. Energy-coupling factor EcfA family. Forms a stable energy-coupling factor (ECF) transporter complex composed of 2 membrane-embedded substrate-binding proteins (S component), 2 ATP-binding proteins (A component) and 2 transmembrane proteins (T component).

The protein localises to the cell membrane. Functionally, ATP-binding (A) component of a common energy-coupling factor (ECF) ABC-transporter complex. Unlike classic ABC transporters this ECF transporter provides the energy necessary to transport a number of different substrates. The sequence is that of Energy-coupling factor transporter ATP-binding protein EcfA1 from Streptococcus pyogenes serotype M5 (strain Manfredo).